The sequence spans 342 residues: tRNA-specific 2-thiouridylase MnmA (342 aa).

Residues 6–13 (LLSGGVDS) and Leu32 each bind ATP. Cys92 (nucleophile) is an active-site residue. Cys92 and Cys191 are disulfide-bonded. Gly116 contributes to the ATP binding site. The interaction with tRNA stretch occupies residues 138-140 (KDQ). The Cysteine persulfide intermediate role is filled by Cys191. The segment at 293-294 (RY) is interaction with tRNA.

It belongs to the MnmA/TRMU family.

The protein localises to the cytoplasm. It catalyses the reaction S-sulfanyl-L-cysteinyl-[protein] + uridine(34) in tRNA + AH2 + ATP = 2-thiouridine(34) in tRNA + L-cysteinyl-[protein] + A + AMP + diphosphate + H(+). In terms of biological role, catalyzes the 2-thiolation of uridine at the wobble position (U34) of tRNA, leading to the formation of s(2)U34. In Helicobacter pylori (strain ATCC 700392 / 26695) (Campylobacter pylori), this protein is tRNA-specific 2-thiouridylase MnmA.